An 874-amino-acid chain; its full sequence is Protein translocase subunit SecA (874 aa).

Residues Q87, 105–109, and D512 contribute to the ATP site; that span reads GEGKT. The Zn(2+) site is built by C859, C861, C870, and H871.

Belongs to the SecA family. Monomer and homodimer. Part of the essential Sec protein translocation apparatus which comprises SecA, SecYEG and auxiliary proteins SecDF-YajC and YidC. It depends on Zn(2+) as a cofactor.

The protein resides in the cell inner membrane. The protein localises to the cytoplasm. It carries out the reaction ATP + H2O + cellular proteinSide 1 = ADP + phosphate + cellular proteinSide 2.. In terms of biological role, part of the Sec protein translocase complex. Interacts with the SecYEG preprotein conducting channel. Has a central role in coupling the hydrolysis of ATP to the transfer of proteins into and across the cell membrane, serving both as a receptor for the preprotein-SecB complex and as an ATP-driven molecular motor driving the stepwise translocation of polypeptide chains across the membrane. The chain is Protein translocase subunit SecA from Buchnera aphidicola subsp. Schizaphis graminum (strain Sg).